A 141-amino-acid polypeptide reads, in one-letter code: ATP synthase epsilon chain (141 aa).

The protein belongs to the ATPase epsilon chain family. In terms of assembly, F-type ATPases have 2 components, CF(1) - the catalytic core - and CF(0) - the membrane proton channel. CF(1) has five subunits: alpha(3), beta(3), gamma(1), delta(1), epsilon(1). CF(0) has three main subunits: a, b and c.

It is found in the cell inner membrane. In terms of biological role, produces ATP from ADP in the presence of a proton gradient across the membrane. In Bordetella petrii (strain ATCC BAA-461 / DSM 12804 / CCUG 43448), this protein is ATP synthase epsilon chain.